Reading from the N-terminus, the 415-residue chain is Leucine-rich repeat-containing protein 34 (415 aa).

2 LRR repeats span residues 246–272 (TLRYLDVSCNKITRDGMVFLADVLKSN) and 274–296 (TLEVLDLSFNRIENAGAKYLSET).

Interacts with NPM1 and NCL.

It localises to the nucleus. It is found in the nucleolus. The protein resides in the cytoplasm. In terms of biological role, highly expressed in stem cells where it may be involved in regulation of pluripotency. In embryonic stem cells (ESCs), important for normal expression of the pluripotency regulators POU5F1/OCT4 and KLF4. Also important for expression of the ectodermal marker gene NES and the endodermal marker gene GATA4. Promotes stem cell proliferation in vitro. The chain is Leucine-rich repeat-containing protein 34 (Lrrc34) from Rattus norvegicus (Rat).